Here is a 183-residue protein sequence, read N- to C-terminus: Ribosome maturation factor RimM (183 aa).

Positions 96–171 (PDEFYDHELE…VALIDPPEGL (76 aa)) constitute a PRC barrel domain.

This sequence belongs to the RimM family. As to quaternary structure, binds ribosomal protein uS19.

Its subcellular location is the cytoplasm. Its function is as follows. An accessory protein needed during the final step in the assembly of 30S ribosomal subunit, possibly for assembly of the head region. Essential for efficient processing of 16S rRNA. May be needed both before and after RbfA during the maturation of 16S rRNA. It has affinity for free ribosomal 30S subunits but not for 70S ribosomes. This Rhodococcus jostii (strain RHA1) protein is Ribosome maturation factor RimM.